A 1683-amino-acid chain; its full sequence is Phospholipase D1 (1683 aa).

Disordered stretches follow at residues 1 to 150 (MSNV…AYTQ), 173 to 198 (LKSS…QQVN), 259 to 289 (ILDI…SIPR), and 384 to 416 (VMEK…NITS). Ser2 carries the N-acetylserine modification. A phosphoserine mark is found at Ser8 and Ser30. 3 stretches are compositionally biased toward basic and acidic residues: residues 20–34 (SVTE…RPDE), 63–82 (NGKE…DRNL), and 90–112 (SLDH…ENMH). Residues 116–125 (NNLHSSNNNV) show a composition bias toward low complexity. Positions 141 to 150 (RRSSSVAYTQ) are enriched in polar residues. A Phosphoserine modification is found at Ser145. Low complexity predominate over residues 263–279 (TNSNHNHRGNNNNNTGE). The PX domain occupies 291–487 (SSIISISSNV…EFYELSPLGN (197 aa)). Positions 392-404 (KPSSAASAPHTSE) are enriched in polar residues. Positions 405 to 416 (NNNNDNGSNITS) are enriched in low complexity. In terms of domain architecture, PH spans 496 to 664 (QGKQGYLVIR…SSIIKMSTST (169 aa)). PLD phosphodiesterase domains follow at residues 791–818 (YFWA…CYGR) and 1091–1118 (EQLY…NERS). Active-site residues include His796, Lys798, Asp803, His1096, Lys1098, and Asp1103. The tract at residues 1430–1465 (KDMRRHLSSSTESTRNGSNSLPLNEKSNEGESTNVD) is disordered. Positions 1437-1451 (SSSTESTRNGSNSLP) are enriched in polar residues. Ser1461 is subject to Phosphoserine. Phosphothreonine is present on Thr1462.

Belongs to the phospholipase D family. As to quaternary structure, interacts with SRF1.

The enzyme catalyses a 1,2-diacyl-sn-glycero-3-phosphocholine + H2O = a 1,2-diacyl-sn-glycero-3-phosphate + choline + H(+). Its activity is regulated as follows. Activity is dependent of phosphatidylinositol 4,5-bisphosphate and the regulator SRF1. Inhibited by magnesium. Functionally, required for meiosis and spore formation. Seems to be involved in the coordinate induction of late meiotic events. PLD activity is induced under sporulation conditions and seems to be necessary to complete the meiotic cycle, but not for vegetative cell growth. The polypeptide is Phospholipase D1 (SPO14) (Saccharomyces cerevisiae (strain ATCC 204508 / S288c) (Baker's yeast)).